Consider the following 702-residue polypeptide: Polyribonucleotide nucleotidyltransferase (702 aa).

Mg(2+) contacts are provided by D493 and D499. Residues 560–619 (PRLLTMRIDPERIRDVIGKGGATIRGLTEETGTNIDISDEGVVTIASADKAAAEEAKKRI) form the KH domain. One can recognise an S1 motif domain in the interval 629–697 (GKVYDGKVAK…RQGRIRLSMK (69 aa)).

It belongs to the polyribonucleotide nucleotidyltransferase family. In terms of assembly, component of the RNA degradosome, which is a multiprotein complex involved in RNA processing and mRNA degradation. It depends on Mg(2+) as a cofactor.

The protein localises to the cytoplasm. The catalysed reaction is RNA(n+1) + phosphate = RNA(n) + a ribonucleoside 5'-diphosphate. Involved in mRNA degradation. Catalyzes the phosphorolysis of single-stranded polyribonucleotides processively in the 3'- to 5'-direction. This is Polyribonucleotide nucleotidyltransferase from Halorhodospira halophila (strain DSM 244 / SL1) (Ectothiorhodospira halophila (strain DSM 244 / SL1)).